The sequence spans 810 residues: Plasminogen (810 aa).

Residues 1-19 (MEHKEVVLLLLLFLKSGQG) form the signal peptide. The PAN domain maps to 20–98 (EPLDDYVNTQ…RDVVLFEKKV (79 aa)). Disulfide bonds link C49–C73, C53–C61, C103–C181, C124–C164, C152–C176, C185–C262, C188–C316, C206–C245, C234–C257, C275–C352, C296–C335, and C324–C347. Kringle domains are found at residues 103 to 181 (CKTG…ILEC) and 184 to 262 (ECMH…IPRC). Positions 126–145 (KWSSTSPHRPRFSPATHPSE) are disordered. L-lysine contacts are provided by R136, D158, and R172. S268 is a glycosylation site (O-linked (GalNAc...) serine). In terms of domain architecture, Kringle 3 spans 275–352 (CLKGTGENYR…RWEYCKIPSC (78 aa)). N-linked (GlcNAc...) asparagine glycosylation occurs at N308. An O-linked (GalNAc...) threonine glycan is attached at T365. 9 disulfides stabilise this stretch: C377-C454, C398-C437, C426-C449, C481-C560, C502-C543, C531-C555, C567-C685, C577-C585, and C607-C623. 2 consecutive Kringle domains span residues 377 to 454 (CYHG…LKKC) and 481 to 560 (CMFG…VPQC). The interval 396–416 (KKCQSWSSMTPHRHQKTPENY) is disordered. Residues D432 and R445 each coordinate L-lysine. The region spanning 581–808 (VVGGCVAHPH…FVTWIEGVMR (228 aa)) is the Peptidase S1 domain. Phosphoserine is present on S597. Residues H622 and D665 each act as charge relay system in the active site. At S688 the chain carries Phosphoserine. Cystine bridges form between C699/C766, C729/C745, and C756/C784. S760 acts as the Charge relay system in catalysis.

Belongs to the peptidase S1 family. Plasminogen subfamily. Interacts (both mature PLG and the angiostatin peptide) with CSPG4 and AMOT. Interacts (via the Kringle domains) with HRG; the interaction tethers PLG to the cell surface and enhances its activation. Interacts (via Kringle 4 domain) with ADA; the interaction stimulates PLG activation when in complex with DPP4. Angiostatin: Interacts with ATP5F1A; the interaction inhibits most of the angiogenic effects of angiostatin. Interacts (plasmin) with iripin-8, a serine protease inhibitor from Ixodes ricinus saliva. Interacts (plasmin) with iripin-1, a serine protease inhibitor from Ixodes ricinus saliva. Interacts (plasmin) with Kazal-type trypsin inhibitor, a serine protease inhibitor from Aedes aegypti. In terms of assembly, (Microbial infection) Interacts with C.albicans GPD2; the interaction is direct and provides active plasmin on the surface of fungal cells. As to quaternary structure, (Microbial infection) Interacts with Staphylococcus aureus protein FnbB; this interaction provides active plasmin on the surface of bacterial cells. (Microbial infection) Interacts with P.falciparum (strain NF54) enolase ENO (via DKSLVK motif); the interaction occurs at the ookinete cell surface and is required for ookinete invasion of the mosquito midgut. In terms of assembly, (Microbial infection) Interacts with B.burgdorferi OspC. In terms of processing, N-linked glycan contains N-acetyllactosamine and sialic acid. O-linked glycans consist of Gal-GalNAc disaccharide modified with up to 2 sialic acid residues (microheterogeneity). In the presence of the inhibitor, the activation involves only cleavage after Arg-580, yielding two chains held together by two disulfide bonds. In the absence of the inhibitor, the activation involves additionally the removal of the activation peptide. Post-translationally, (Microbial infection) The Y.pestis Pla protein cleaves between Arg-580 and Val-581, generating plasmin which facilitates bacterial migration and infection. Present in plasma and many other extracellular fluids. It is synthesized in the liver.

The protein localises to the secreted. It carries out the reaction Preferential cleavage: Lys-|-Xaa &gt; Arg-|-Xaa, higher selectivity than trypsin. Converts fibrin into soluble products.. Converted into plasmin by plasminogen activators, both plasminogen and its activator being bound to fibrin. Activated with catalytic amounts of streptokinase. Plasmin activity inhibited by SERPINE2. Plasmin dissolves the fibrin of blood clots and acts as a proteolytic factor in a variety of other processes including embryonic development, tissue remodeling, tumor invasion, and inflammation. In ovulation, weakens the walls of the Graafian follicle. It activates the urokinase-type plasminogen activator, collagenases and several complement zymogens, such as C1, C4 and C5. Cleavage of fibronectin and laminin leads to cell detachment and apoptosis. Also cleaves fibrin, thrombospondin and von Willebrand factor. Its role in tissue remodeling and tumor invasion may be modulated by CSPG4. Binds to cells. Its function is as follows. Angiostatin is an angiogenesis inhibitor that blocks neovascularization and growth of experimental primary and metastatic tumors in vivo. In terms of biological role, (Microbial infection) ENO/enoloase from parasite P.falciparum (strain NF54) interacts with PLG present in the mosquito blood meal to promote the invasion of the mosquito midgut by the parasite ookinete. The catalytic active form, plasmin, is essential for the invasion of the mosquito midgut. Functionally, (Microbial infection) Binds to OspC on the surface of B.burgdorferi cells, possibly conferring an extracellular protease activity on the bacteria that allows it to traverse host tissue. (Microbial infection) Interacts with dengue virus type 2 particles. Enhances dengue virus type 2 infection in Aedes aegypti mosquito midgut by increasing midgut internalization, resulting in higher infection rates and viral dissemination in mosquitoes. The polypeptide is Plasminogen (PLG) (Homo sapiens (Human)).